The sequence spans 306 residues: Dirigent protein 24 (306 aa).

Residues 1–21 form the signal peptide; that stretch reads MAKALSLTIFLFLLIASNVQS. The tract at residues 36 to 61 is disordered; it reads PQVPEEEDDSPQAVTTTPTPIPLPGP.

The protein belongs to the plant dirigent protein family. In terms of assembly, homodimer.

The protein resides in the secreted. It localises to the extracellular space. It is found in the apoplast. Dirigent proteins impart stereoselectivity on the phenoxy radical-coupling reaction, yielding optically active lignans from two molecules of coniferyl alcohol in the biosynthesis of lignans, flavonolignans, and alkaloids and thus plays a central role in plant secondary metabolism. This Arabidopsis thaliana (Mouse-ear cress) protein is Dirigent protein 24 (DIR24).